We begin with the raw amino-acid sequence, 1070 residues long: DNA-directed RNA polymerase subunit beta (1070 aa).

It belongs to the RNA polymerase beta chain family. As to quaternary structure, in plastids the minimal PEP RNA polymerase catalytic core is composed of four subunits: alpha, beta, beta', and beta''. When a (nuclear-encoded) sigma factor is associated with the core the holoenzyme is formed, which can initiate transcription.

The protein localises to the plastid. Its subcellular location is the chloroplast. It catalyses the reaction RNA(n) + a ribonucleoside 5'-triphosphate = RNA(n+1) + diphosphate. Its function is as follows. DNA-dependent RNA polymerase catalyzes the transcription of DNA into RNA using the four ribonucleoside triphosphates as substrates. The polypeptide is DNA-directed RNA polymerase subunit beta (Vitis vinifera (Grape)).